Reading from the N-terminus, the 396-residue chain is Chaperone protein DnaJ (396 aa).

Residues 6–71 (DYYEVLEVTK…DKRSRYDQFG (66 aa)) form the J domain. The CR-type zinc-finger motif lies at 154–236 (GVEKKFKLKK…CGGDGIVYGE (83 aa)). Zn(2+)-binding residues include Cys167, Cys170, Cys184, Cys187, Cys210, Cys213, Cys224, and Cys227. CXXCXGXG motif repeat units follow at residues 167–174 (CNHCHGTG), 184–191 (CPTCKGSG), 210–217 (CPTCNGEG), and 224–231 (CKECGGDG).

This sequence belongs to the DnaJ family. As to quaternary structure, homodimer. The cofactor is Zn(2+).

Its subcellular location is the cytoplasm. Functionally, participates actively in the response to hyperosmotic and heat shock by preventing the aggregation of stress-denatured proteins and by disaggregating proteins, also in an autonomous, DnaK-independent fashion. Unfolded proteins bind initially to DnaJ; upon interaction with the DnaJ-bound protein, DnaK hydrolyzes its bound ATP, resulting in the formation of a stable complex. GrpE releases ADP from DnaK; ATP binding to DnaK triggers the release of the substrate protein, thus completing the reaction cycle. Several rounds of ATP-dependent interactions between DnaJ, DnaK and GrpE are required for fully efficient folding. Also involved, together with DnaK and GrpE, in the DNA replication of plasmids through activation of initiation proteins. This chain is Chaperone protein DnaJ, found in Bacteroides thetaiotaomicron (strain ATCC 29148 / DSM 2079 / JCM 5827 / CCUG 10774 / NCTC 10582 / VPI-5482 / E50).